The primary structure comprises 460 residues: Bifunctional protein GlmU (460 aa).

Residues 1–229 are pyrophosphorylase; sequence MSKLNIVVLA…VWETTGVNSK (229 aa). UDP-N-acetyl-alpha-D-glucosamine-binding positions include 9 to 12, Lys23, Gln74, 79 to 80, 101 to 103, Gly138, Glu154, Asn169, and Asn227; these read LAAG, GT, and YGD. Residue Asp103 coordinates Mg(2+). Asn227 contributes to the Mg(2+) binding site. Residues 230-250 are linker; sequence VQLAGLERIYQTAQANKLLEQ. Residues 251–460 are N-acetyltransferase; the sequence is GVALADPARI…RPVKKPKPKN (210 aa). Positions 333 and 351 each coordinate UDP-N-acetyl-alpha-D-glucosamine. The active-site Proton acceptor is the His363. Residues Tyr366 and Asn377 each coordinate UDP-N-acetyl-alpha-D-glucosamine. Acetyl-CoA is bound by residues Ala380, 386 to 387, Ser405, Ala423, and Arg440; that span reads NY.

It in the N-terminal section; belongs to the N-acetylglucosamine-1-phosphate uridyltransferase family. The protein in the C-terminal section; belongs to the transferase hexapeptide repeat family. Homotrimer. The cofactor is Mg(2+).

It localises to the cytoplasm. It carries out the reaction alpha-D-glucosamine 1-phosphate + acetyl-CoA = N-acetyl-alpha-D-glucosamine 1-phosphate + CoA + H(+). The catalysed reaction is N-acetyl-alpha-D-glucosamine 1-phosphate + UTP + H(+) = UDP-N-acetyl-alpha-D-glucosamine + diphosphate. It participates in nucleotide-sugar biosynthesis; UDP-N-acetyl-alpha-D-glucosamine biosynthesis; N-acetyl-alpha-D-glucosamine 1-phosphate from alpha-D-glucosamine 6-phosphate (route II): step 2/2. It functions in the pathway nucleotide-sugar biosynthesis; UDP-N-acetyl-alpha-D-glucosamine biosynthesis; UDP-N-acetyl-alpha-D-glucosamine from N-acetyl-alpha-D-glucosamine 1-phosphate: step 1/1. The protein operates within bacterial outer membrane biogenesis; LPS lipid A biosynthesis. Catalyzes the last two sequential reactions in the de novo biosynthetic pathway for UDP-N-acetylglucosamine (UDP-GlcNAc). The C-terminal domain catalyzes the transfer of acetyl group from acetyl coenzyme A to glucosamine-1-phosphate (GlcN-1-P) to produce N-acetylglucosamine-1-phosphate (GlcNAc-1-P), which is converted into UDP-GlcNAc by the transfer of uridine 5-monophosphate (from uridine 5-triphosphate), a reaction catalyzed by the N-terminal domain. In Nitrosospira multiformis (strain ATCC 25196 / NCIMB 11849 / C 71), this protein is Bifunctional protein GlmU.